A 170-amino-acid chain; its full sequence is ATP synthase subunit b (170 aa).

A helical membrane pass occupies residues 15–37 (FNLFETNILNWAVVVFGLYKFLP).

This sequence belongs to the ATPase B chain family. As to quaternary structure, F-type ATPases have 2 components, F(1) - the catalytic core - and F(0) - the membrane proton channel. F(1) has five subunits: alpha(3), beta(3), gamma(1), delta(1), epsilon(1). F(0) has four main subunits: a(1), b(1), b'(1) and c(10-14). The alpha and beta chains form an alternating ring which encloses part of the gamma chain. F(1) is attached to F(0) by a central stalk formed by the gamma and epsilon chains, while a peripheral stalk is formed by the delta, b and b' chains.

The protein localises to the cellular thylakoid membrane. In terms of biological role, f(1)F(0) ATP synthase produces ATP from ADP in the presence of a proton or sodium gradient. F-type ATPases consist of two structural domains, F(1) containing the extramembraneous catalytic core and F(0) containing the membrane proton channel, linked together by a central stalk and a peripheral stalk. During catalysis, ATP synthesis in the catalytic domain of F(1) is coupled via a rotary mechanism of the central stalk subunits to proton translocation. Component of the F(0) channel, it forms part of the peripheral stalk, linking F(1) to F(0). The chain is ATP synthase subunit b from Prochlorococcus marinus (strain MIT 9312).